The chain runs to 211 residues: Claudin-7 (211 aa).

The Cytoplasmic segment spans residues 1–7 (MANSGLQ). A helical membrane pass occupies residues 8 to 28 (LLGFSMAMLGWVGLIASTAIP). Over 29 to 81 (QWQMSSYAGDNIITAQAMYKGLWMECVTQSTGMMSCKMYDSVLALPAATQATR) the chain is Extracellular. The helical transmembrane segment at 82–102 (ALMIVSLVLGFLAMFVATMGM) threads the bilayer. The Cytoplasmic portion of the chain corresponds to 103–119 (KCTRCGGDDKVKKARIA). A helical transmembrane segment spans residues 120 to 140 (MTGGIIFIVAGLAALVACSWI). The Extracellular segment spans residues 141-160 (GHQIVTDFYNPLTPMNIKYE). Residues 161 to 181 (FGPAIFIGWAGSALVLLGGAL) form a helical membrane-spanning segment. Topologically, residues 182 to 211 (LSCSCPGSESKAAYRAPRSYPKSNSSKEYV) are cytoplasmic. Positions 210 to 211 (YV) are interactions with TJP1, TJP2 and TJP3.

This sequence belongs to the claudin family. In terms of assembly, directly interacts with TJP1/ZO-1, TJP2/ZO-2 and TJP3/ZO-3. The phosphorylated form interacts with EPCAM. Post-translationally, phosphorylated.

It localises to the cell membrane. Its subcellular location is the basolateral cell membrane. It is found in the cell junction. The protein resides in the tight junction. In terms of biological role, plays a major role in tight junction-specific obliteration of the intercellular space. This chain is Claudin-7 (Cldn7), found in Rattus norvegicus (Rat).